Consider the following 301-residue polypeptide: Phosphatidylglycerol--prolipoprotein diacylglyceryl transferase (301 aa).

Helical transmembrane passes span 10–30 (IAFSLGPVKVHWYGLMYLAGF), 57–77 (LLFYAMMGVVLGGRVGYMLFY), 92–112 (VWEGGMSFHGGLIGVLLAVAW), and 119–139 (MHMFDVVDFCAPLVPVGLGFG). A 1,2-diacyl-sn-glycero-3-phospho-(1'-sn-glycerol) is bound at residue Arg140. The next 3 membrane-spanning stretches (helical) occupy residues 202-222 (PSQLYEAFLEGLVMFIVLWLF), 230-250 (YAVSGLFALLYGVFRFLVEFV), and 264-284 (LTRGQILSLPLIVIGLFLFWL).

This sequence belongs to the Lgt family.

The protein localises to the cell inner membrane. It carries out the reaction L-cysteinyl-[prolipoprotein] + a 1,2-diacyl-sn-glycero-3-phospho-(1'-sn-glycerol) = an S-1,2-diacyl-sn-glyceryl-L-cysteinyl-[prolipoprotein] + sn-glycerol 1-phosphate + H(+). Its pathway is protein modification; lipoprotein biosynthesis (diacylglyceryl transfer). In terms of biological role, catalyzes the transfer of the diacylglyceryl group from phosphatidylglycerol to the sulfhydryl group of the N-terminal cysteine of a prolipoprotein, the first step in the formation of mature lipoproteins. The polypeptide is Phosphatidylglycerol--prolipoprotein diacylglyceryl transferase (Xylella fastidiosa (strain M23)).